Here is a 456-residue protein sequence, read N- to C-terminus: tRNA modification GTPase MnmE (456 aa).

Positions 24, 81, and 120 each coordinate (6S)-5-formyl-5,6,7,8-tetrahydrofolate. A TrmE-type G domain is found at 216–379 (GMTVVIAGRP…LREHLKACMG (164 aa)). N226 is a K(+) binding site. Residues 226–231 (NAGKSS), 245–251 (TEIAGTT), 270–273 (DTAG), 335–338 (NKAD), and 359–361 (SAR) contribute to the GTP site. Residue S230 participates in Mg(2+) binding. K(+) is bound by residues T245, I247, and T250. T251 is a Mg(2+) binding site. Residue K456 coordinates (6S)-5-formyl-5,6,7,8-tetrahydrofolate.

It belongs to the TRAFAC class TrmE-Era-EngA-EngB-Septin-like GTPase superfamily. TrmE GTPase family. In terms of assembly, homodimer. Heterotetramer of two MnmE and two MnmG subunits. It depends on K(+) as a cofactor.

Its subcellular location is the cytoplasm. Exhibits a very high intrinsic GTPase hydrolysis rate. Involved in the addition of a carboxymethylaminomethyl (cmnm) group at the wobble position (U34) of certain tRNAs, forming tRNA-cmnm(5)s(2)U34. The sequence is that of tRNA modification GTPase MnmE from Pseudomonas syringae pv. tomato (strain ATCC BAA-871 / DC3000).